A 1696-amino-acid chain; its full sequence is E3 ubiquitin-protein ligase listerin (1696 aa).

HEAT repeat units lie at residues 17-55 (RGVL…KVKK), 102-140 (FCKE…KYFR), 144-181 (CSLL…WKYS), 209-250 (AEAS…CWEH), 252-289 (NAQK…RVPT), 354-394 (LISD…KAES), 431-468 (EKNL…GEGD), 542-580 (FPSI…PAVQ), 596-634 (EESD…KWSV), 921-958 (LCTA…AEML), 992-1029 (MDLS…KRGA), 1108-1148 (DLCQ…LIGL), 1150-1188 (VEMI…WLES), 1245-1282 (GIYS…TLGY), 1307-1344 (DSLQ…DLPG), 1371-1405 (VLAI…CFVL), and 1406-1442 (GYLL…LNKL). The RING-type zinc-finger motif lies at 1645–1692 (CMICFSVIHGSNYSLPKKACRTCKKKFHSECLYKWFTSSNKSTCPLCR).

It belongs to the LTN1 family. As to quaternary structure, component of the ribosome quality control complex (RQC), composed of at least the E3 ubiquitin ligase LTN1 and NEMF associated with the 60S ribosomal subunit. The complex probably also contains TCF25 as well as VCP/p97 and its ubiquitin-binding cofactors.

Its subcellular location is the cytoplasm. It localises to the cytosol. It catalyses the reaction S-ubiquitinyl-[E2 ubiquitin-conjugating enzyme]-L-cysteine + [acceptor protein]-L-lysine = [E2 ubiquitin-conjugating enzyme]-L-cysteine + N(6)-ubiquitinyl-[acceptor protein]-L-lysine.. It functions in the pathway protein modification; protein ubiquitination. In terms of biological role, E3 ubiquitin-protein ligase component of the ribosome quality control complex (RQC), a ribosome-associated complex that mediates ubiquitination and extraction of incompletely synthesized nascent chains for proteasomal degradation. Within the RQC complex, LTN1 is recruited to stalled 60S ribosomal subunits by NEMF and mediates ubiquitination of stalled nascent chains. Ubiquitination leads to VCP/p97 recruitment for extraction and degradation of the incomplete translation product. The polypeptide is E3 ubiquitin-protein ligase listerin (ltn1) (Xenopus tropicalis (Western clawed frog)).